We begin with the raw amino-acid sequence, 790 residues long: Protein sel-1 homolog 1 (790 aa).

An N-terminal signal peptide occupies residues 1–21; the sequence is MQVRVRLSLLLLCAVLLGSAA. The disordered stretch occupies residues 22 to 51; sequence ATSDDKTNQDDSLDSKSSLPTDESVKDHTT. Over 22–734 the chain is Lumenal; the sequence is ATSDDKTNQD…LFTQLDMDQL (713 aa). Residues 23-733 are interaction with ERLEC1, OS9 and SYVN1; sequence TSDDKTNQDD…DLFTQLDMDQ (711 aa). A Phosphoserine modification is found at Ser64. The segment covering 67-78 has biased composition (acidic residues); that stretch reads AEVESLLQDEED. The tract at residues 67–98 is disordered; sequence AEVESLLQDEEDSSKTQEEEISFLESPNPSSK. A Fibronectin type-II domain is found at 118–166; it reads AHGEPCHFPFLFLDKEYDECTSDGREDGRLWCATTYDYKTDEKWGFCET. Intrachain disulfides connect Cys123–Cys149 and Cys137–Cys164. Sel1-like repeat units lie at residues 179-214, 215-250, 251-286, 287-322, 369-405, 406-442, 443-478, 479-514, and 515-550; these read AEMI…GMNH, TKAL…EEGS, PKGQ…LGGN, LIAH…NHVA, VQAQ…NAGN, SHAM…DMGN, PVGQ…EQGW, VDGQ…QGGH, and ILAF…ERGR. N-linked (GlcNAc...) asparagine glycans are attached at residues Asn191 and Asn213. The N-linked (GlcNAc...) asparagine glycan is linked to Asn268. The tract at residues 348 to 533 is important for homodimerization and oligomerization; that stretch reads NSGMLEEDLI…MHASGTGVMR (186 aa). N-linked (GlcNAc...) asparagine glycosylation is present at Asn427. The N-linked (GlcNAc...) asparagine glycan is linked to Asn604. 2 Sel1-like repeats span residues 623–658 and 660–695; these read TVAR…EQQH and AQAM…EASP. Residues 639 to 719 form an interaction with SYVN1 region; it reads TDVDYETAFI…VVYFLQYIRE (81 aa). The segment at 734–790 is mediates retention in the endoplasmic reticulum; the sequence is LLGPEWDLYLMTIIALLLGTVIAYRQRQHQDIPVPRPPGPRPAPPQQEGPPEQQPPQ. A helical membrane pass occupies residues 735 to 755; the sequence is LGPEWDLYLMTIIALLLGTVI. The Cytoplasmic portion of the chain corresponds to 756–790; it reads AYRQRQHQDIPVPRPPGPRPAPPQQEGPPEQQPPQ. Residues 763-790 form a disordered region; that stretch reads QDIPVPRPPGPRPAPPQQEGPPEQQPPQ. Over residues 767–790 the composition is skewed to pro residues; that stretch reads VPRPPGPRPAPPQQEGPPEQQPPQ.

This sequence belongs to the sel-1 family. Homodimer and homooligomer. May form a complex with ERLEC1, HSPA5, OS9, and SYVN1. Interacts with FOXRED2 and EDEM1. Interacts with LPL and LMF1; may stabilize the complex formed by LPL and LMF1 and thereby promote the export of LPL dimers. Component of the HRD1 complex, which comprises at least SYNV1/HRD1, DERL1/2, FAM8A1, HERPUD1/HERP, OS9, SEL1L and UBE2J1. SYNV1 assembles with SEL1L and FAM8A1 through its transmembrane domains, but interaction with its cytoplasmic domain is required to confer stability to FAM8A1 and enhance recruitment of HERPUD1. The interaction with SYNV1/HRD1 is direct. Post-translationally, N-glycosylated. In terms of tissue distribution, highly expressed in pancreas, white adipose tissue, liver and spleen (at protein level). Detected in heart, brain, spleen, lung, liver, kidney and testis.

Its subcellular location is the endoplasmic reticulum membrane. In terms of biological role, plays a role in the endoplasmic reticulum quality control (ERQC) system also called ER-associated degradation (ERAD) involved in ubiquitin-dependent degradation of misfolded endoplasmic reticulum proteins. Enhances SYVN1 stability. Plays a role in LPL maturation and secretion. Required for normal differentiation of the pancreas epithelium, and for normal exocrine function and survival of pancreatic cells. May play a role in Notch signaling. In Mus musculus (Mouse), this protein is Protein sel-1 homolog 1 (Sel1l).